Reading from the N-terminus, the 704-residue chain is Neutral ceramidase (704 aa).

The N-terminal stretch at 1–23 is a signal peptide; that stretch reads MAISKIAFLALIALSGLCGLASA. Asn-230 is a glycosylation site (N-linked (GlcNAc...) asparagine). Ser-276 (nucleophile) is an active-site residue. 3 N-linked (GlcNAc...) asparagine glycosylation sites follow: Asn-362, Asn-550, and Asn-598.

This sequence belongs to the neutral ceramidase family. Post-translationally, N-glycosylated.

It localises to the secreted. The catalysed reaction is an N-acylsphing-4-enine + H2O = sphing-4-enine + a fatty acid. Functionally, hydrolyzes the sphingolipid ceramide into sphingosine and free fatty acid at an optimal pH of 6.5-7.5. Acts as a key regulator of sphingolipid signaling metabolites by generating sphingosine at the cell surface. In Drosophila pseudoobscura pseudoobscura (Fruit fly), this protein is Neutral ceramidase (CDase).